A 192-amino-acid polypeptide reads, in one-letter code: Peptide deformylase 1 (192 aa).

C101 and H143 together coordinate Fe cation. Residue E144 is part of the active site. H147 contacts Fe cation.

This sequence belongs to the polypeptide deformylase family. Requires Fe(2+) as cofactor.

It carries out the reaction N-terminal N-formyl-L-methionyl-[peptide] + H2O = N-terminal L-methionyl-[peptide] + formate. Its function is as follows. Removes the formyl group from the N-terminal Met of newly synthesized proteins. Requires at least a dipeptide for an efficient rate of reaction. N-terminal L-methionine is a prerequisite for activity but the enzyme has broad specificity at other positions. The sequence is that of Peptide deformylase 1 from Prochlorococcus marinus (strain MIT 9313).